Consider the following 727-residue polypeptide: Transcription activator of gluconeogenesis TRV_01442 (727 aa).

The segment covering 1–32 has biased composition (polar residues); it reads MSPHQTTGQESDNMTVNGENAQASSQYIQSNE. A disordered region spans residues 1-62; sequence MSPHQTTGQE…PSRPKRKKAK (62 aa). The segment covering 39 to 55 has biased composition (basic and acidic residues); it reads ATEKKASAAKAAKDPSR. A DNA-binding region (zn(2)-C6 fungal-type) is located at residues 65–93; it reads CYACQRGHLTCGDERPCQRCIKRGFQDAC. Polar residues-rich tracts occupy residues 129–213, 267–277, and 361–379; these read NNVN…TPSA, PSDSGAQRGSI, and MMTT…GAFN. Disordered regions lie at residues 129–224, 264–297, 353–399, 533–567, and 627–666; these read NNVN…FNST, DTPP…ESPS, SPAS…STPQ, NHNV…YNSS, and GSNG…QRRW. Composition is skewed to low complexity over residues 380 to 399 and 543 to 553; these read SRQN…STPQ and GLMTGSTSRGS. Positions 639 to 661 are enriched in polar residues; it reads EATSNETNELNGSHTNGATTNGR.

It belongs to the ERT1/acuK family.

The protein localises to the nucleus. Transcription factor which regulates nonfermentable carbon utilization. Activator of gluconeogenetic genes. The chain is Transcription activator of gluconeogenesis TRV_01442 from Trichophyton verrucosum (strain HKI 0517).